The chain runs to 446 residues: Glucose-6-phosphate isomerase (446 aa).

The active-site Proton donor is the glutamate 288. Residues histidine 309 and lysine 423 contribute to the active site.

It belongs to the GPI family.

Its subcellular location is the cytoplasm. It catalyses the reaction alpha-D-glucose 6-phosphate = beta-D-fructose 6-phosphate. It participates in carbohydrate biosynthesis; gluconeogenesis. The protein operates within carbohydrate degradation; glycolysis; D-glyceraldehyde 3-phosphate and glycerone phosphate from D-glucose: step 2/4. Catalyzes the reversible isomerization of glucose-6-phosphate to fructose-6-phosphate. This chain is Glucose-6-phosphate isomerase, found in Lactobacillus delbrueckii subsp. bulgaricus (strain ATCC 11842 / DSM 20081 / BCRC 10696 / JCM 1002 / NBRC 13953 / NCIMB 11778 / NCTC 12712 / WDCM 00102 / Lb 14).